Reading from the N-terminus, the 267-residue chain is Undecaprenyl-diphosphatase (267 aa).

The next 7 helical transmembrane spans lie at 4–24 (LYAL…ISST), 41–61 (FWKS…IFVF), 69–89 (LDIW…GLFV), 96–116 (LFNG…FILI), 173–193 (AAEF…AYSI), 207–227 (IPLG…IKFF), and 239–259 (FGIY…SGIL).

It belongs to the UppP family.

Its subcellular location is the cell inner membrane. It carries out the reaction di-trans,octa-cis-undecaprenyl diphosphate + H2O = di-trans,octa-cis-undecaprenyl phosphate + phosphate + H(+). Its function is as follows. Catalyzes the dephosphorylation of undecaprenyl diphosphate (UPP). Confers resistance to bacitracin. This chain is Undecaprenyl-diphosphatase, found in Campylobacter jejuni subsp. jejuni serotype O:23/36 (strain 81-176).